A 465-amino-acid chain; its full sequence is Tapasin (465 aa).

Residues 1–23 (MKPLLLLVAVALGLATVVSVVSA) form the signal peptide. Topologically, residues 24-416 (GPEAIECWFV…GFSGPSIEDG (393 aa)) are lumenal. Cysteines 30 and 94 form a disulfide. Residue N256 is glycosylated (N-linked (GlcNAc...) asparagine). Positions 295–402 (PRVSLTPAPV…PASGRSADVT (108 aa)) constitute an Ig-like C1-type domain. C318 and C385 are oxidised to a cystine. The chain crosses the membrane as a helical span at residues 417 to 437 (IGLFLSAFLLLGLLKVLGWLA). Residues 438–465 (AYWTIPEVSKEKATAASLTIPRNSKKSQ) lie on the Cytoplasmic side of the membrane.

In terms of assembly, heterodimer with PDIA3; disulfide-linked. Obligatory mediator for the interaction between newly assembled MHC class I molecules, calreticulin, PDIA3 and TAP. Up to 4 MHC class I/tapasin complexes bind to 1 TAP. Interacts with HLA-G-B2M complex; this interaction is required for loading of high affinity peptides. On its own or as part of MHC class I peptide loading complex, interacts with ligand-free MR1 or MR1-B2M complex, providing for stable MR1 pools ready for metabolite antigen processing.

It is found in the endoplasmic reticulum membrane. Its function is as follows. Involved in the association of MHC class I with transporter associated with antigen processing (TAP) and in the assembly of MHC class I with peptide (peptide loading). In Mus musculus (Mouse), this protein is Tapasin (Tapbp).